A 360-amino-acid chain; its full sequence is Phospho-N-acetylmuramoyl-pentapeptide-transferase (360 aa).

10 helical membrane passes run 21-41 (YVTF…LWWG), 74-94 (MGGI…GDLG), 97-117 (YVWV…IDDY), 135-155 (ILQS…ADTV), 168-188 (IMPQ…VGSS), 199-219 (GLAI…AYLS), 236-256 (AGEL…FLWF), 263-283 (VFMG…IAVL), 288-308 (ILLV…ILQV), and 338-358 (VIVR…ATLK).

It belongs to the glycosyltransferase 4 family. MraY subfamily. Mg(2+) is required as a cofactor.

Its subcellular location is the cell inner membrane. It carries out the reaction UDP-N-acetyl-alpha-D-muramoyl-L-alanyl-gamma-D-glutamyl-meso-2,6-diaminopimeloyl-D-alanyl-D-alanine + di-trans,octa-cis-undecaprenyl phosphate = di-trans,octa-cis-undecaprenyl diphospho-N-acetyl-alpha-D-muramoyl-L-alanyl-D-glutamyl-meso-2,6-diaminopimeloyl-D-alanyl-D-alanine + UMP. The protein operates within cell wall biogenesis; peptidoglycan biosynthesis. Functionally, catalyzes the initial step of the lipid cycle reactions in the biosynthesis of the cell wall peptidoglycan: transfers peptidoglycan precursor phospho-MurNAc-pentapeptide from UDP-MurNAc-pentapeptide onto the lipid carrier undecaprenyl phosphate, yielding undecaprenyl-pyrophosphoryl-MurNAc-pentapeptide, known as lipid I. In Shewanella violacea (strain JCM 10179 / CIP 106290 / LMG 19151 / DSS12), this protein is Phospho-N-acetylmuramoyl-pentapeptide-transferase.